A 367-amino-acid chain; its full sequence is Ferrochelatase (367 aa).

2 residues coordinate Fe cation: H213 and E294.

The protein belongs to the ferrochelatase family.

It is found in the cytoplasm. It carries out the reaction heme b + 2 H(+) = protoporphyrin IX + Fe(2+). It functions in the pathway porphyrin-containing compound metabolism; protoheme biosynthesis; protoheme from protoporphyrin-IX: step 1/1. Functionally, catalyzes the ferrous insertion into protoporphyrin IX. This chain is Ferrochelatase, found in Polaromonas sp. (strain JS666 / ATCC BAA-500).